Here is a 275-residue protein sequence, read N- to C-terminus: Thiazole synthase (275 aa).

Lys108 serves as the catalytic Schiff-base intermediate with DXP. Residues Gly169, Ala196 to Gly197, and Asn218 to Thr219 each bind 1-deoxy-D-xylulose 5-phosphate.

Belongs to the ThiG family. As to quaternary structure, homotetramer. Forms heterodimers with either ThiH or ThiS.

The protein localises to the cytoplasm. It catalyses the reaction [ThiS sulfur-carrier protein]-C-terminal-Gly-aminoethanethioate + 2-iminoacetate + 1-deoxy-D-xylulose 5-phosphate = [ThiS sulfur-carrier protein]-C-terminal Gly-Gly + 2-[(2R,5Z)-2-carboxy-4-methylthiazol-5(2H)-ylidene]ethyl phosphate + 2 H2O + H(+). It participates in cofactor biosynthesis; thiamine diphosphate biosynthesis. Catalyzes the rearrangement of 1-deoxy-D-xylulose 5-phosphate (DXP) to produce the thiazole phosphate moiety of thiamine. Sulfur is provided by the thiocarboxylate moiety of the carrier protein ThiS. In vitro, sulfur can be provided by H(2)S. This is Thiazole synthase from Ralstonia nicotianae (strain ATCC BAA-1114 / GMI1000) (Ralstonia solanacearum).